A 271-amino-acid chain; its full sequence is Mannosyl-3-phosphoglycerate phosphatase (271 aa).

The Nucleophile role is filled by Asp-13. Mg(2+) is bound by residues Asp-13, Asp-15, and Asp-214.

Belongs to the HAD-like hydrolase superfamily. MPGP family. The cofactor is Mg(2+).

The protein localises to the cytoplasm. The catalysed reaction is 2-O-(alpha-D-mannosyl)-3-phosphoglycerate + H2O = (2R)-2-O-(alpha-D-mannosyl)-glycerate + phosphate. This Shigella boydii serotype 4 (strain Sb227) protein is Mannosyl-3-phosphoglycerate phosphatase (yedP).